A 398-amino-acid polypeptide reads, in one-letter code: Phosphoglycerate kinase (398 aa).

Substrate is bound by residues 23 to 25 (DFN), arginine 38, 61 to 64 (HMGK), arginine 122, and arginine 155. ATP is bound by residues lysine 206, glycine 297, glutamate 328, and 354 to 357 (GGDS).

Belongs to the phosphoglycerate kinase family. Monomer.

It localises to the cytoplasm. The enzyme catalyses (2R)-3-phosphoglycerate + ATP = (2R)-3-phospho-glyceroyl phosphate + ADP. Its pathway is carbohydrate degradation; glycolysis; pyruvate from D-glyceraldehyde 3-phosphate: step 2/5. This chain is Phosphoglycerate kinase, found in Clostridium botulinum (strain Okra / Type B1).